A 278-amino-acid chain; its full sequence is SPX domain-containing protein 2 (278 aa).

Residues 1-162 (MKFGKSLSSQ…GSMIRLPFVQ (162 aa)) enclose the SPX domain. Disordered stretches follow at residues 191–242 (PTNE…KSTV) and 255–278 (GSST…EPGR).

Interacts (via SPX domain) with PHR2 (via C-terminus). Interacts with RLI1 in the nucleus to prevents its positive regulation of leaf inclination during phosphate (Pi) starvation.

It is found in the nucleus. Inhibits PHR2 DNA-binding activity via a phosphate (Pi)-dependent protein interaction. Together with SPX1, plays a negative role in the regulation of leaf inclination by preventing RLI1 transcription factor activity in Pi depleted conditions. The chain is SPX domain-containing protein 2 from Oryza sativa subsp. indica (Rice).